The following is a 254-amino-acid chain: uncharacterized protein (254 aa).

The NADP(+) site is built by Ile-18, Ser-37, Asp-63, Asn-90, Tyr-159, Lys-163, Val-192, and Thr-194. Tyr-159 acts as the Proton donor in catalysis. Lys-163 serves as the catalytic Lowers pKa of active site Tyr.

Belongs to the short-chain dehydrogenases/reductases (SDR) family.

The protein resides in the cytoplasm. The protein localises to the nucleus. This is an uncharacterized protein from Schizosaccharomyces pombe (strain 972 / ATCC 24843) (Fission yeast).